The primary structure comprises 172 residues: 3-hydroxydecanoyl-[acyl-carrier-protein] dehydratase (172 aa).

Residue histidine 71 is part of the active site.

It belongs to the thioester dehydratase family. FabA subfamily. In terms of assembly, homodimer.

The protein localises to the cytoplasm. It carries out the reaction a (3R)-hydroxyacyl-[ACP] = a (2E)-enoyl-[ACP] + H2O. It catalyses the reaction (3R)-hydroxydecanoyl-[ACP] = (2E)-decenoyl-[ACP] + H2O. The enzyme catalyses (2E)-decenoyl-[ACP] = (3Z)-decenoyl-[ACP]. It participates in lipid metabolism; fatty acid biosynthesis. Functionally, necessary for the introduction of cis unsaturation into fatty acids. Catalyzes the dehydration of (3R)-3-hydroxydecanoyl-ACP to E-(2)-decenoyl-ACP and then its isomerization to Z-(3)-decenoyl-ACP. Can catalyze the dehydratase reaction for beta-hydroxyacyl-ACPs with saturated chain lengths up to 16:0, being most active on intermediate chain length. The chain is 3-hydroxydecanoyl-[acyl-carrier-protein] dehydratase from Blochmanniella pennsylvanica (strain BPEN).